The following is a 397-amino-acid chain: Staphylopine export protein (397 aa).

The next 12 membrane-spanning stretches (helical) occupy residues 12–32, 38–58, 77–97, 102–122, 134–154, 158–178, 217–237, 239–259, 285–305, 309–329, 337–357, and 363–383; these read LYIL…FIPL, GATN…AMVF, IILI…LEGY, VMQG…IIDA, LYSL…VGIW, NISL…FFGY, GIIM…VPLY, VSLG…AVVA, LLVI…IIFY, ILIG…LSFV, MLLG…GALM, and LVGF…IMIM.

The protein belongs to the major facilitator superfamily.

The protein localises to the cell membrane. In terms of biological role, involved in the export of the metallophore staphylopine. The sequence is that of Staphylopine export protein from Staphylococcus aureus (strain Mu50 / ATCC 700699).